A 390-amino-acid polypeptide reads, in one-letter code: Protein arginine N-methyltransferase 1.1 (390 aa).

Over residues 1–10 (MTKNSNHDEN) the composition is skewed to basic and acidic residues. The disordered stretch occupies residues 1-59 (MTKNSNHDENEFISFEPNQNTKIRFEDADEDEVAEGSGVAGEETPQDESMFDAGESADT). One can recognise an SAM-dependent MTase PRMT-type domain in the interval 69–390 (ADYYFDSYSH…ISRTQHYKMR (322 aa)). Residues E181 and E190 contribute to the active site.

Belongs to the class I-like SAM-binding methyltransferase superfamily. Protein arginine N-methyltransferase family. As to quaternary structure, interacts with PRMT12, MBD7 and FIB2.

Its subcellular location is the nucleus. The protein resides in the cytoplasm. It carries out the reaction L-arginyl-[protein] + 2 S-adenosyl-L-methionine = N(omega),N(omega)-dimethyl-L-arginyl-[protein] + 2 S-adenosyl-L-homocysteine + 2 H(+). Methylates (mono and asymmetric dimethylation) the guanidino nitrogens of arginyl residues present in a glycine and arginine-rich domain. Type I arginine methyltransferase active on both histones and non-histone proteins. Required for leaves and flowers development. Mediates the methylation of MBD7 and MED36A. The sequence is that of Protein arginine N-methyltransferase 1.1 (PRMT11) from Arabidopsis thaliana (Mouse-ear cress).